The primary structure comprises 172 residues: NADH-ubiquinone oxidoreductase chain 6 (172 aa).

Transmembrane regions (helical) follow at residues M1 to S21, Y27 to G47, I48 to V68, V87 to F107, and C138 to L158.

This sequence belongs to the complex I subunit 6 family.

It localises to the mitochondrion membrane. It catalyses the reaction a ubiquinone + NADH + 5 H(+)(in) = a ubiquinol + NAD(+) + 4 H(+)(out). Functionally, core subunit of the mitochondrial membrane respiratory chain NADH dehydrogenase (Complex I) that is believed to belong to the minimal assembly required for catalysis. Complex I functions in the transfer of electrons from NADH to the respiratory chain. The immediate electron acceptor for the enzyme is believed to be ubiquinone. In Uria aalge (Common mure), this protein is NADH-ubiquinone oxidoreductase chain 6 (MT-ND6).